The chain runs to 467 residues: Cytochrome c-552 (467 aa).

The signal sequence occupies residues 1–27; sequence MMKKMTGKSFALSALVAASFMAAGAMA. His87 contributes to the heme c binding site. Cys115, Cys118, and Lys119 together coordinate heme. 6 residues coordinate heme c: Cys153, Cys156, His157, Cys195, Cys198, and His199. Residues Glu201, Tyr202, Lys250, and Gln252 each contribute to the Ca(2+) site. Residue Tyr202 coordinates substrate. His253 contacts substrate. 9 residues coordinate heme c: His264, Cys271, Cys274, His275, His290, Cys303, Cys306, His307, and His382.

The protein belongs to the cytochrome c-552 family. Requires Ca(2+) as cofactor. Heme c serves as cofactor.

The protein resides in the periplasm. It carries out the reaction 6 Fe(III)-[cytochrome c] + NH4(+) + 2 H2O = 6 Fe(II)-[cytochrome c] + nitrite + 8 H(+). It participates in nitrogen metabolism; nitrate reduction (assimilation). Catalyzes the reduction of nitrite to ammonia, consuming six electrons in the process. This is Cytochrome c-552 from Shewanella sp. (strain MR-4).